Reading from the N-terminus, the 669-residue chain is Glutamate--cysteine ligase (669 aa).

This sequence belongs to the glutamate--cysteine ligase type 3 family. Heterodimer of a catalytic heavy chain and a regulatory light chain.

It catalyses the reaction L-cysteine + L-glutamate + ATP = gamma-L-glutamyl-L-cysteine + ADP + phosphate + H(+). It functions in the pathway sulfur metabolism; glutathione biosynthesis; glutathione from L-cysteine and L-glutamate: step 1/2. Catalyzes the ATP-dependent ligation of L-glutamate and L-cysteine and participates in the first and rate-limiting step in glutathione biosynthesis. This is Glutamate--cysteine ligase (gcs1) from Schizosaccharomyces pombe (strain 972 / ATCC 24843) (Fission yeast).